The primary structure comprises 177 residues: Inner membrane protein p22 (177 aa).

Topologically, residues 1–7 (MFNIKMT) are intravirion. A helical membrane pass occupies residues 8–28 (ISTLLIALIILVIIILVVFLY). Residues 29–177 (YKKQQPPKKV…IALPRNHKHA (149 aa)) are Virion surface-facing.

This sequence belongs to the asfivirus inner membrane protein p22 family.

Its subcellular location is the virion membrane. It is found in the host cell membrane. This is Inner membrane protein p22 from Ornithodoros (relapsing fever ticks).